We begin with the raw amino-acid sequence, 738 residues long: Transcription activator of gluconeogenesis SMAC_06113 (738 aa).

The tract at residues 1 to 65 (MPDDVGPAEA…KYDPKDPLRP (65 aa)) is disordered. Composition is skewed to basic and acidic residues over residues 28–39 (ATTKDDDEKMAE) and 51–64 (GDQK…DPLR). Residues 74–102 (CYACQRAHLTCGDERPCQRCIKRGLAEAC) constitute a DNA-binding region (zn(2)-C6 fungal-type). Disordered regions lie at residues 255–278 (SSGA…GDVG), 328–404 (HAYA…KRQR), 530–579 (GTNS…KEQP), and 636–673 (SVPT…TGAN). Composition is skewed to polar residues over residues 337 to 351 (TSLQ…SPQP) and 530 to 540 (GTNSDTLSVSS). The region spanning 475-546 (ALFEHEEFMH…SVSSKGGRGG (72 aa)) is the PAS domain. Low complexity-rich tracts occupy residues 568–579 (QQQQSQQQKEQP) and 636–655 (SVPT…VNGG).

It belongs to the ERT1/acuK family.

Its subcellular location is the nucleus. Transcription factor which regulates nonfermentable carbon utilization. Activator of gluconeogenetic genes. This chain is Transcription activator of gluconeogenesis SMAC_06113, found in Sordaria macrospora (strain ATCC MYA-333 / DSM 997 / K(L3346) / K-hell).